The sequence spans 181 residues: Oligoribonuclease (181 aa).

An Exonuclease domain is found at 8 to 171 (LIWVDLEMTG…VDIQESIAEL (164 aa)). The active site involves tyrosine 129.

It belongs to the oligoribonuclease family.

Its subcellular location is the cytoplasm. Functionally, 3'-to-5' exoribonuclease specific for small oligoribonucleotides. The polypeptide is Oligoribonuclease (Shewanella loihica (strain ATCC BAA-1088 / PV-4)).